The primary structure comprises 399 residues: Dual-specificity RNA methyltransferase RlmN (399 aa).

E122 acts as the Proton acceptor in catalysis. A Radical SAM core domain is found at 128 to 371 (ETDRGTLCVS…VRTPRGRDIL (244 aa)). A disulfide bond links C135 and C374. Residues C142, C146, and C149 each coordinate [4Fe-4S] cluster. S-adenosyl-L-methionine contacts are provided by residues 200–201 (GE), S232, 254–256 (SLH), and N331. The active-site S-methylcysteine intermediate is C374.

This sequence belongs to the radical SAM superfamily. RlmN family. Requires [4Fe-4S] cluster as cofactor.

It is found in the cytoplasm. It catalyses the reaction adenosine(2503) in 23S rRNA + 2 reduced [2Fe-2S]-[ferredoxin] + 2 S-adenosyl-L-methionine = 2-methyladenosine(2503) in 23S rRNA + 5'-deoxyadenosine + L-methionine + 2 oxidized [2Fe-2S]-[ferredoxin] + S-adenosyl-L-homocysteine. The enzyme catalyses adenosine(37) in tRNA + 2 reduced [2Fe-2S]-[ferredoxin] + 2 S-adenosyl-L-methionine = 2-methyladenosine(37) in tRNA + 5'-deoxyadenosine + L-methionine + 2 oxidized [2Fe-2S]-[ferredoxin] + S-adenosyl-L-homocysteine. Its function is as follows. Specifically methylates position 2 of adenine 2503 in 23S rRNA and position 2 of adenine 37 in tRNAs. m2A2503 modification seems to play a crucial role in the proofreading step occurring at the peptidyl transferase center and thus would serve to optimize ribosomal fidelity. This chain is Dual-specificity RNA methyltransferase RlmN, found in Rhodopseudomonas palustris (strain BisB18).